The sequence spans 141 residues: Large ribosomal subunit protein uL11 (141 aa).

This sequence belongs to the universal ribosomal protein uL11 family. In terms of assembly, part of the ribosomal stalk of the 50S ribosomal subunit. Interacts with L10 and the large rRNA to form the base of the stalk. L10 forms an elongated spine to which L12 dimers bind in a sequential fashion forming a multimeric L10(L12)X complex. Post-translationally, one or more lysine residues are methylated.

In terms of biological role, forms part of the ribosomal stalk which helps the ribosome interact with GTP-bound translation factors. The sequence is that of Large ribosomal subunit protein uL11 from Acaryochloris marina (strain MBIC 11017).